A 445-amino-acid polypeptide reads, in one-letter code: Phosphoglucosamine mutase (445 aa).

Ser-105 functions as the Phosphoserine intermediate in the catalytic mechanism. The Mg(2+) site is built by Ser-105, Asp-244, Asp-246, and Asp-248. A Phosphoserine modification is found at Ser-105.

The protein belongs to the phosphohexose mutase family. The cofactor is Mg(2+). In terms of processing, activated by phosphorylation.

The enzyme catalyses alpha-D-glucosamine 1-phosphate = D-glucosamine 6-phosphate. Its function is as follows. Catalyzes the conversion of glucosamine-6-phosphate to glucosamine-1-phosphate. The sequence is that of Phosphoglucosamine mutase from Janthinobacterium sp. (strain Marseille) (Minibacterium massiliensis).